The chain runs to 262 residues: Acyl-[acyl-carrier-protein]--UDP-N-acetylglucosamine O-acyltransferase (262 aa).

The protein belongs to the transferase hexapeptide repeat family. LpxA subfamily. As to quaternary structure, homotrimer.

The protein resides in the cytoplasm. The enzyme catalyses a (3R)-hydroxyacyl-[ACP] + UDP-N-acetyl-alpha-D-glucosamine = a UDP-3-O-[(3R)-3-hydroxyacyl]-N-acetyl-alpha-D-glucosamine + holo-[ACP]. Its pathway is glycolipid biosynthesis; lipid IV(A) biosynthesis; lipid IV(A) from (3R)-3-hydroxytetradecanoyl-[acyl-carrier-protein] and UDP-N-acetyl-alpha-D-glucosamine: step 1/6. Its function is as follows. Involved in the biosynthesis of lipid A, a phosphorylated glycolipid that anchors the lipopolysaccharide to the outer membrane of the cell. The chain is Acyl-[acyl-carrier-protein]--UDP-N-acetylglucosamine O-acyltransferase from Vibrio cholerae serotype O1 (strain ATCC 39541 / Classical Ogawa 395 / O395).